The chain runs to 86 residues: MDENIKKAEYYYKKGVEVGNKGDVEKALEYFNKAIELNPFYRDAWFNKALALRILGRYEEARECFFRGLAVEKHLTHKKYNSDDEK.

TPR repeat units follow at residues 8-41 (AEYY…NPFY) and 42-75 (RDAW…EKHL).

This is an uncharacterized protein from Methanocaldococcus jannaschii (strain ATCC 43067 / DSM 2661 / JAL-1 / JCM 10045 / NBRC 100440) (Methanococcus jannaschii).